Here is a 248-residue protein sequence, read N- to C-terminus: Probable transcriptional regulatory protein Dde_2325 (248 aa).

Over residues 1–15 the composition is skewed to basic residues; sequence MAGHSKWKNIQHRKG. Positions 1-22 are disordered; it reads MAGHSKWKNIQHRKGRQDAKKS.

The protein belongs to the TACO1 family.

The protein resides in the cytoplasm. This chain is Probable transcriptional regulatory protein Dde_2325, found in Oleidesulfovibrio alaskensis (strain ATCC BAA-1058 / DSM 17464 / G20) (Desulfovibrio alaskensis).